Here is a 294-residue protein sequence, read N- to C-terminus: Acetylglutamate kinase (294 aa).

Substrate-binding positions include 47-48, Arg-69, and Asn-168; that span reads GG.

The protein belongs to the acetylglutamate kinase family. ArgB subfamily.

Its subcellular location is the cytoplasm. It catalyses the reaction N-acetyl-L-glutamate + ATP = N-acetyl-L-glutamyl 5-phosphate + ADP. The protein operates within amino-acid biosynthesis; L-arginine biosynthesis; N(2)-acetyl-L-ornithine from L-glutamate: step 2/4. Catalyzes the ATP-dependent phosphorylation of N-acetyl-L-glutamate. This is Acetylglutamate kinase from Corynebacterium glutamicum (strain ATCC 13032 / DSM 20300 / JCM 1318 / BCRC 11384 / CCUG 27702 / LMG 3730 / NBRC 12168 / NCIMB 10025 / NRRL B-2784 / 534).